The chain runs to 395 residues: Acetate kinase 1 (395 aa).

Asn-8 serves as a coordination point for Mg(2+). Lys-15 is a binding site for ATP. Position 89 (Arg-89) interacts with substrate. The active-site Proton donor/acceptor is Asp-146. ATP is bound by residues 206–210 (HIGNG), 283–285 (DMR), and 330–334 (GIGEN). A Mg(2+)-binding site is contributed by Glu-382.

It belongs to the acetokinase family. In terms of assembly, homodimer. Mg(2+) serves as cofactor. It depends on Mn(2+) as a cofactor.

It is found in the cytoplasm. The catalysed reaction is acetate + ATP = acetyl phosphate + ADP. It participates in metabolic intermediate biosynthesis; acetyl-CoA biosynthesis; acetyl-CoA from acetate: step 1/2. Functionally, catalyzes the formation of acetyl phosphate from acetate and ATP. Can also catalyze the reverse reaction. The chain is Acetate kinase 1 from Lactococcus lactis subsp. lactis (strain IL1403) (Streptococcus lactis).